The primary structure comprises 99 residues: Integration host factor subunit alpha (99 aa).

Positions 51-71 are disordered; the sequence is NFDLRDKNQRPGRNPKTGEDI.

The protein belongs to the bacterial histone-like protein family. Heterodimer of an alpha and a beta chain.

Functionally, this protein is one of the two subunits of integration host factor, a specific DNA-binding protein that functions in genetic recombination as well as in transcriptional and translational control. This Dickeya dadantii (strain 3937) (Erwinia chrysanthemi (strain 3937)) protein is Integration host factor subunit alpha (ihfA).